Here is a 489-residue protein sequence, read N- to C-terminus: MDYFKTDLASLHADLVAKKISARELTQATFDNIKTTDAQVDAFLTLNEDAALKQATKIDEQGVATDQPLAGIPVALKDNIVTKGLKTTAASKMLANFNPVYDATVTEKLAQAQMITVGKTNLDEFAMGGSTENSAFKTTKNAWDYTKVPGGSSGGSAAAVASGQVLAALGSDTGGSIRQPAAFNGIVGLKPTYGRVSRWGLIAFGSSLDQIGPMTRSVKDNATMLSAIAGHDEHDLTSSTQPVPDFAADLTDATSVKGMRIGLPKEFLADGVADDVKQAILAAADTYRQLGATVDEVSLPHNKYGVAAYYIIGSSEASSNLQRFDGIRYGHRADDVKNLEDVYVKSRSEGFGDEVKRRIMLGTFSLSAGFYDAYFLKAAKVRTVIMNDFKAVLKDHDFIMGPVAPTPAFGIGDEIKDPITMYMNDVLTIPVNLAGLPGLSLPAGFSQGLPVGMQLIGRPFDESTLYKAGYAFEQNTDFHLQVPTLGGQH.

Residues K77 and S152 each act as charge relay system in the active site. The active-site Acyl-ester intermediate is S176.

This sequence belongs to the amidase family. GatA subfamily. In terms of assembly, heterotrimer of A, B and C subunits.

The catalysed reaction is L-glutamyl-tRNA(Gln) + L-glutamine + ATP + H2O = L-glutaminyl-tRNA(Gln) + L-glutamate + ADP + phosphate + H(+). Allows the formation of correctly charged Gln-tRNA(Gln) through the transamidation of misacylated Glu-tRNA(Gln) in organisms which lack glutaminyl-tRNA synthetase. The reaction takes place in the presence of glutamine and ATP through an activated gamma-phospho-Glu-tRNA(Gln). The chain is Glutamyl-tRNA(Gln) amidotransferase subunit A from Levilactobacillus brevis (strain ATCC 367 / BCRC 12310 / CIP 105137 / JCM 1170 / LMG 11437 / NCIMB 947 / NCTC 947) (Lactobacillus brevis).